Here is a 354-residue protein sequence, read N- to C-terminus: Phosphoribosylformylglycinamidine cyclo-ligase (354 aa).

The protein belongs to the AIR synthase family.

The protein resides in the cytoplasm. It catalyses the reaction 2-formamido-N(1)-(5-O-phospho-beta-D-ribosyl)acetamidine + ATP = 5-amino-1-(5-phospho-beta-D-ribosyl)imidazole + ADP + phosphate + H(+). It participates in purine metabolism; IMP biosynthesis via de novo pathway; 5-amino-1-(5-phospho-D-ribosyl)imidazole from N(2)-formyl-N(1)-(5-phospho-D-ribosyl)glycinamide: step 2/2. This Synechococcus sp. (strain JA-2-3B'a(2-13)) (Cyanobacteria bacterium Yellowstone B-Prime) protein is Phosphoribosylformylglycinamidine cyclo-ligase.